The sequence spans 876 residues: Protein argonaute 17 (876 aa).

Residues 246–338 form the PAZ domain; the sequence is PVVDYVAQLL…LPLEVCKIAE (93 aa). Residues 514 to 834 enclose the Piwi domain; that stretch reads LLIVILPNNN…LSSRARCYIK (321 aa). Positions 839-859 are disordered; sequence GDSTSHTSLPSEEDSSAASET.

This sequence belongs to the argonaute family. Ago subfamily.

Its function is as follows. Probably involved in the RNA silencing pathway. May bind to short RNAs such as microRNAs (miRNAs) or short interfering RNAs (siRNAs), and represses the translation of mRNAs which are complementary to them. The polypeptide is Protein argonaute 17 (AGO17) (Oryza sativa subsp. japonica (Rice)).